Consider the following 142-residue polypeptide: NADH-quinone oxidoreductase subunit A 2 (142 aa).

The next 3 helical transmembrane spans lie at 18–38 (FLPL…LLLA), 73–93 (FYLI…IFAW), and 104–124 (GLVH…WLWL).

The protein belongs to the complex I subunit 3 family. NDH-1 is composed of 14 different subunits. Subunits NuoA, H, J, K, L, M, N constitute the membrane sector of the complex.

Its subcellular location is the cell inner membrane. The catalysed reaction is a quinone + NADH + 5 H(+)(in) = a quinol + NAD(+) + 4 H(+)(out). In terms of biological role, NDH-1 shuttles electrons from NADH, via FMN and iron-sulfur (Fe-S) centers, to quinones in the respiratory chain. The immediate electron acceptor for the enzyme in this species is believed to be ubiquinone. Couples the redox reaction to proton translocation (for every two electrons transferred, four hydrogen ions are translocated across the cytoplasmic membrane), and thus conserves the redox energy in a proton gradient. This chain is NADH-quinone oxidoreductase subunit A 2, found in Geobacter sulfurreducens (strain ATCC 51573 / DSM 12127 / PCA).